Here is a 547-residue protein sequence, read N- to C-terminus: Sodium-coupled neutral amino acid transporter 4 (547 aa).

The disordered stretch occupies residues 1–30 (MDPMELRNVNIEPDDESSSGESAPDSYIGI). Residues 1–104 (MDPMELRNVN…GLSYAMANTG (104 aa)) lie on the Extracellular side of the membrane. At S49 the chain carries Phosphoserine. The helical transmembrane segment at 105–125 (IILFIIMLLAVAILSLYSVHL) threads the bilayer. Residues 126–151 (LLKTAKEGGSLIYEKLGEKAFGWPGK) lie on the Cytoplasmic side of the membrane. A helical transmembrane segment spans residues 152–172 (IGAFVSITMQNIGAMSSYLFI). Residues 173–195 (IKYELPEVIRAFMGLEENTGEWY) lie on the Extracellular side of the membrane. The helical transmembrane segment at 196-216 (LNGNYLIIFVSVGIILPLSLL) threads the bilayer. At 217-220 (KNLG) the chain is on the cytoplasmic side. The helical transmembrane segment at 221-241 (YLGYTSGFSLTCMVFFVSVVI) threads the bilayer. Residues 242-332 (YKKFQIPCPL…PKYFVFNSRT (91 aa)) lie on the Extracellular side of the membrane. An intrachain disulfide couples C249 to C321. N260, N264, and N276 each carry an N-linked (GlcNAc...) asparagine glycan. Residues 333-353 (AYAIPILVFAFVCHPEVLPIY) traverse the membrane as a helical segment. The Cytoplasmic segment spans residues 354 to 369 (SELKDRSRRKMQTVSN). The chain crosses the membrane as a helical span at residues 370 to 390 (ISITGMLVMYLLAALFGYLTF). Residues 391–411 (YGEVEDELLHAYSKVYTLDIP) are Extracellular-facing. The chain crosses the membrane as a helical span at residues 412 to 432 (LLMVRLAVLVAVTLTVPIVLF). Residues 433-453 (PIRTSVITLLFPKRPFSWIRH) are Cytoplasmic-facing. The chain crosses the membrane as a helical span at residues 454–474 (FLIAAVLIALNNVLVILVPTI). Residues 475-476 (KY) are Extracellular-facing. A helical membrane pass occupies residues 477 to 497 (IFGFIGASSATMLIFILPAVF). The Cytoplasmic segment spans residues 498 to 514 (YLKLVKKETFRSPQKVG). The chain crosses the membrane as a helical span at residues 515-535 (ALIFLVVGIFFMIGSMALIII). The Extracellular segment spans residues 536 to 547 (DWIYDPPNSKHH).

Belongs to the amino acid/polyamine transporter 2 family. The disulfide bond plays an important role in substrate transport, but has no effect on trafficking to the cell surface. In terms of tissue distribution, expressed almost exclusively in embryonic and adult liver, and at lower levels in the kidney. Expressed at lower levels in adult muscle and pancreas. Detected in fetal blood vessels. Expressed in syncytiotrophoblas of placenta during first trimester and at term. Highly expressed in first trimester placenta compared to term placenta.

The protein localises to the cell membrane. The protein resides in the cell projection. Its subcellular location is the microvillus membrane. The catalysed reaction is L-methionine(in) + Na(+)(in) = L-methionine(out) + Na(+)(out). The enzyme catalyses L-asparagine(in) + Na(+)(in) = L-asparagine(out) + Na(+)(out). It carries out the reaction L-threonine(in) + Na(+)(in) = L-threonine(out) + Na(+)(out). It catalyses the reaction L-serine(in) + Na(+)(in) = L-serine(out) + Na(+)(out). The catalysed reaction is glycine(in) + Na(+)(in) = glycine(out) + Na(+)(out). The enzyme catalyses L-alanine(in) + Na(+)(in) = L-alanine(out) + Na(+)(out). It carries out the reaction L-glutamine(in) + Na(+)(in) = L-glutamine(out) + Na(+)(out). It catalyses the reaction L-histidine(in) + Na(+)(in) = L-histidine(out) + Na(+)(out). The catalysed reaction is L-cysteine(in) + Na(+)(in) = L-cysteine(out) + Na(+)(out). The enzyme catalyses L-proline(in) + Na(+)(in) = L-proline(out) + Na(+)(out). Functionally, symporter that cotransports neutral amino acids and sodium ions from the extraccellular to the intracellular side of the cell membrane. The transport is electrogenic, pH dependent and partially tolerates substitution of Na(+) by Li(+). Preferentially transports smaller amino acids, such as glycine, L-alanine, L-serine, L-asparagine and L-threonine, followed by L-cysteine, L-histidine, L-proline and L-glutamine and L-methionine. This Homo sapiens (Human) protein is Sodium-coupled neutral amino acid transporter 4.